Consider the following 105-residue polypeptide: Probable molt-inhibiting hormone (105 aa).

The signal sequence occupies residues 1–28 (MYRMPMRFWLTAVVMVVVGALLLDTASA). 3 disulfide bridges follow: Cys-35–Cys-72, Cys-52–Cys-68, and Cys-55–Cys-81.

The protein belongs to the arthropod CHH/MIH/GIH/VIH hormone family. As to expression, expressed in the postmolt, intermolt, and premolt stages of the shrimp eyestalks and the brain.

It is found in the secreted. Inhibits Y-organs where molting hormone (ecdysteroid) is secreted. A molting cycle is initiated when MIH secretion diminishes or stops. The protein is Probable molt-inhibiting hormone of Metapenaeus ensis (Greasyback shrimp).